A 615-amino-acid chain; its full sequence is Alpha-1,3-galactosidase B (615 aa).

Residues 1-23 (MRTFLSLKTCLLSALLLCVNSIA) form the signal peptide. 6 PbH1 repeats span residues 282–313 (SKNI…HFMG), 423–445 (TPDA…LVST), 446–467 (PGKV…LIAG), 478–500 (VKDV…YQFC), 520–541 (HRNI…LFAR), and 543–573 (VNGL…TLEA).

This sequence belongs to the glycosyl hydrolase 110 family. B subfamily.

It carries out the reaction Hydrolysis of terminal, non-reducing branched (1-&gt;3)-alpha-D-galactosidic residues, producing free D-galactose.. The catalysed reaction is Hydrolysis of terminal, non-reducing linear (1-&gt;3)-alpha-D-galactosidic residues, producing free D-galactose.. The enzyme catalyses Hydrolysis of terminal, non-reducing alpha-D-galactose residues in alpha-D-galactosides, including galactose oligosaccharides, galactomannans and galactolipids.. In terms of biological role, alpha-galactosidase. Removes both branched alpha-1,3-linked galactose residues of blood group B antigens and linear alpha-1,3-linked galactose structures. In Bacteroides thetaiotaomicron (strain ATCC 29148 / DSM 2079 / JCM 5827 / CCUG 10774 / NCTC 10582 / VPI-5482 / E50), this protein is Alpha-1,3-galactosidase B (glaB).